Reading from the N-terminus, the 683-residue chain is Synaptic vesicle glycoprotein 2B (683 aa).

The segment at 1 to 42 (MDDYKYQDNYGGYAPSDGYYRGNESNPEEDAQSDVTEGHDEE) is disordered. The Cytoplasmic portion of the chain corresponds to 1–108 (MDDYKYQDNY…MDECGHGRFQ (108 aa)). Residue S33 is modified to Phosphoserine. Phosphothreonine is present on T36. A helical membrane pass occupies residues 109 to 129 (WILFFVLGLALMADGVEVFVV). Topologically, residues 130–148 (SFALPSAEKDMCLSSSKKG) are extracellular. Residues 149–169 (MLGMIVYLGMMAGAFILGGLA) traverse the membrane as a helical segment. Topologically, residues 170 to 182 (DKLGRKRVLSMSL) are cytoplasmic. Residues 183-203 (AVNASFASLSSFVQGYGAFLF) form a helical membrane-spanning segment. Residues 204-205 (CR) lie on the Extracellular side of the membrane. Residues 206-226 (LISGIGIGGALPIVFAYFSEF) form a helical membrane-spanning segment. Residues 227 to 237 (LSREKRGEHLS) lie on the Cytoplasmic side of the membrane. A helical transmembrane segment spans residues 238-258 (WLGIFWMTGGLYASAMAWSII). The Extracellular portion of the chain corresponds to 259–277 (PHYGWGFSMGTNYHFHSWR). A helical membrane pass occupies residues 278 to 298 (VFVIVCALPCTVSMVALKFMP). Residues 299–390 (ESPRFLLEMG…CVMGPYRMNT (92 aa)) are Cytoplasmic-facing. The helical transmembrane segment at 391–411 (LILAVVWFAMAFSYYGLTVWF) threads the bilayer. The Extracellular portion of the chain corresponds to 412–535 (PDMIRYFQDE…CHMDLEQDND (124 aa)). Y423 is subject to Phosphotyrosine. N441, N491, and N516 each carry an N-linked (GlcNAc...) asparagine glycan. Residues 536–556 (FLIYLVSFLGSLSVLPGNIIS) form a helical membrane-spanning segment. At 557–565 (ALLMDRIGR) the chain is on the cytoplasmic side. Residues 566–586 (LKMIGGSMLISAVCCFFLFFG) form a helical membrane-spanning segment. At 587 to 592 (NSESAM) the chain is on the extracellular side. Residues 593-613 (IGWQCLFCGTSIAAWNALDVI) traverse the membrane as a helical segment. Residues 614–626 (TVELYPTNQRATA) are Cytoplasmic-facing. A helical transmembrane segment spans residues 627-649 (FGILNGLCKFGAILGNTIFASFV). Residues 650–653 (GITK) lie on the Extracellular side of the membrane. A helical transmembrane segment spans residues 654-672 (VVPILLAAASLVGGGLIAL). The Cytoplasmic segment spans residues 673 to 683 (RLPETREQVLM).

It belongs to the major facilitator superfamily. As to quaternary structure, interacts with SYT1 in a calcium-independent manner. Forms a complex with SYT1, syntaxin-1 and SNAP25. (Microbial infection) Interacts with C.botulinum neurotoxin type A2 (BoNT/A, botA). Interaction is improved by glycosylation of SV2. Post-translationally, N-glycosylated. The N-terminal cytoplasmic domain is phosphorylated by CK1.

It localises to the cytoplasmic vesicle. It is found in the secretory vesicle. The protein localises to the synaptic vesicle membrane. Its subcellular location is the acrosome. Functionally, probably plays a role in the control of regulated secretion in neural and endocrine cells. In terms of biological role, (Microbial infection) Receptor for the C.botulinum neurotoxin type A2 (BoNT/A, botA); glycosylation is not essential but enhances the interaction. Probably also serves as a receptor for the closely related C.botulinum neurotoxin type A1. In Homo sapiens (Human), this protein is Synaptic vesicle glycoprotein 2B (SV2B).